A 212-amino-acid polypeptide reads, in one-letter code: Thiamine-phosphate synthase (212 aa).

4-amino-2-methyl-5-(diphosphooxymethyl)pyrimidine-binding positions include 33 to 37 (QMRFK) and asparagine 65. Positions 66 and 85 each coordinate Mg(2+). Threonine 104 is a 4-amino-2-methyl-5-(diphosphooxymethyl)pyrimidine binding site. A 2-[(2R,5Z)-2-carboxy-4-methylthiazol-5(2H)-ylidene]ethyl phosphate-binding site is contributed by 130-132 (TNT). Position 133 (lysine 133) interacts with 4-amino-2-methyl-5-(diphosphooxymethyl)pyrimidine. Glycine 166 contacts 2-[(2R,5Z)-2-carboxy-4-methylthiazol-5(2H)-ylidene]ethyl phosphate.

Belongs to the thiamine-phosphate synthase family. Requires Mg(2+) as cofactor.

It catalyses the reaction 2-[(2R,5Z)-2-carboxy-4-methylthiazol-5(2H)-ylidene]ethyl phosphate + 4-amino-2-methyl-5-(diphosphooxymethyl)pyrimidine + 2 H(+) = thiamine phosphate + CO2 + diphosphate. It carries out the reaction 2-(2-carboxy-4-methylthiazol-5-yl)ethyl phosphate + 4-amino-2-methyl-5-(diphosphooxymethyl)pyrimidine + 2 H(+) = thiamine phosphate + CO2 + diphosphate. The catalysed reaction is 4-methyl-5-(2-phosphooxyethyl)-thiazole + 4-amino-2-methyl-5-(diphosphooxymethyl)pyrimidine + H(+) = thiamine phosphate + diphosphate. It functions in the pathway cofactor biosynthesis; thiamine diphosphate biosynthesis; thiamine phosphate from 4-amino-2-methyl-5-diphosphomethylpyrimidine and 4-methyl-5-(2-phosphoethyl)-thiazole: step 1/1. Its function is as follows. Condenses 4-methyl-5-(beta-hydroxyethyl)thiazole monophosphate (THZ-P) and 2-methyl-4-amino-5-hydroxymethyl pyrimidine pyrophosphate (HMP-PP) to form thiamine monophosphate (TMP). The chain is Thiamine-phosphate synthase from Flavobacterium johnsoniae (strain ATCC 17061 / DSM 2064 / JCM 8514 / BCRC 14874 / CCUG 350202 / NBRC 14942 / NCIMB 11054 / UW101) (Cytophaga johnsonae).